A 195-amino-acid polypeptide reads, in one-letter code: Cysteine/O-acetylserine efflux protein (195 aa).

Topologically, residues 1 to 7 are periplasmic; sequence MTPTLLS. The helical transmembrane segment at 8 to 28 threads the bilayer; sequence AFWTYTLITAMTPGPNNILAL. At 29-46 the chain is on the cytoplasmic side; the sequence is SSATTHGFHQSTRVLAGM. The chain crosses the membrane as a helical span at residues 47-67; sequence SLGFLIVMLLCAGISFSLAVI. Topologically, residues 68-69 are periplasmic; it reads DP. A helical transmembrane segment spans residues 70–90; the sequence is AAVHLLSWAGAAYIVWLAWKI. Residues 91 to 104 are Cytoplasmic-facing; it reads ATSPTKEDGLQTKP. Residues 105 to 125 traverse the membrane as a helical segment; it reads ISFWASFALQFVNVKIILYGV. Topologically, residues 126 to 141 are periplasmic; that stretch reads TALSTFVLPQTQALSW. A helical transmembrane segment spans residues 142–162; that stretch reads IVGVSVLLAMIGTFGNVCWAL. Over 163-176 the chain is Cytoplasmic; it reads AGHLFQRLFRQYGR. Residues 177–194 form a helical membrane-spanning segment; the sequence is QLNIVLALLLIYCAVRIF. Tyr195 is a topological domain (periplasmic).

It belongs to the Rht family.

The protein localises to the cell inner membrane. The enzyme catalyses O-acetyl-L-serine(in) = O-acetyl-L-serine(out). The catalysed reaction is L-cysteine(in) = L-cysteine(out). In terms of biological role, exporter of O-acetylserine (OAS) and cysteine. In Escherichia coli O157:H7, this protein is Cysteine/O-acetylserine efflux protein (eamB).